The primary structure comprises 514 residues: 2,3-bisphosphoglycerate-independent phosphoglycerate mutase (514 aa).

Mn(2+) is bound by residues Asp14 and Ser64. Residue Ser64 is the Phosphoserine intermediate of the active site. Substrate contacts are provided by residues His125, 155-156, Arg187, Arg193, 263-266, and Lys336; these read RD and RADR. The Mn(2+) site is built by Asp403, His407, Asp444, His445, and His463.

The protein belongs to the BPG-independent phosphoglycerate mutase family. Monomer. It depends on Mn(2+) as a cofactor.

It catalyses the reaction (2R)-2-phosphoglycerate = (2R)-3-phosphoglycerate. Its pathway is carbohydrate degradation; glycolysis; pyruvate from D-glyceraldehyde 3-phosphate: step 3/5. Its function is as follows. Catalyzes the interconversion of 2-phosphoglycerate and 3-phosphoglycerate. This Salmonella typhi protein is 2,3-bisphosphoglycerate-independent phosphoglycerate mutase.